The sequence spans 550 residues: Membrane protein of ER body 2 (550 aa).

The disordered stretch occupies residues 46 to 199; that stretch reads EFRSKAAATA…SSDSEEKSNL (154 aa). Low complexity-rich tracts occupy residues 80–105 and 112–121; these read SVSE…SETG and TGSNEENGNN. Residues 122–132 show a composition bias toward polar residues; sequence WLESSSTNLPN. A coiled-coil region spans residues 134–165; sequence ENKRQRNGEDCEIEEEEENNERSLSDSEEKSN. The segment covering 143 to 152 has biased composition (acidic residues); sequence DCEIEEEEEN. Composition is skewed to basic and acidic residues over residues 153 to 166 and 185 to 198; these read NERS…KSNL and KNER…EKSN. The next 4 membrane-spanning stretches (helical) occupy residues 374–394, 425–445, 458–478, and 500–520; these read STMN…IVLA, ILVA…VYAF, ISVF…KVYV, and SIVV…GEYI. The stretch at 393–418 forms a coiled coil; that stretch reads LAQNFQDLRNSSDQEKDRYEELLGRR.

Belongs to the CCC1 family. As to quaternary structure, interacts directly or indirectly with NAI2.

It localises to the endoplasmic reticulum membrane. In terms of biological role, may sequester excess cytosolic iron and manganese into endoplasmic reticulum to reduce metal ion toxicity. Not essential for the accumulation of ER body components, including PYK10. This chain is Membrane protein of ER body 2 (MEB2), found in Arabidopsis thaliana (Mouse-ear cress).